The sequence spans 332 residues: Inositol 2-dehydrogenase 2 (332 aa).

Belongs to the Gfo/Idh/MocA family. As to quaternary structure, homotetramer.

It carries out the reaction myo-inositol + NAD(+) = scyllo-inosose + NADH + H(+). Functionally, involved in the oxidation of myo-inositol (MI) to 2-keto-myo-inositol (2KMI or 2-inosose). The polypeptide is Inositol 2-dehydrogenase 2 (Paenarthrobacter aurescens (strain TC1)).